The sequence spans 461 residues: Bifunctional protein GlmU (461 aa).

The interval 1–229 (MEKYVVVLAA…FSESLGVNDR (229 aa)) is pyrophosphorylase. UDP-N-acetyl-alpha-D-glucosamine is bound by residues 8-11 (LAAG), lysine 22, glutamine 72, and 77-78 (GT). Aspartate 102 contributes to the Mg(2+) binding site. Positions 139, 154, 169, and 227 each coordinate UDP-N-acetyl-alpha-D-glucosamine. Asparagine 227 lines the Mg(2+) pocket. The tract at residues 230–250 (IALAEATRIMQRRINEGHMRD) is linker. The N-acetyltransferase stretch occupies residues 251 to 461 (GVTFIDPATA…LPLSEDEEWK (211 aa)). 2 residues coordinate UDP-N-acetyl-alpha-D-glucosamine: arginine 332 and lysine 350. Catalysis depends on histidine 362, which acts as the Proton acceptor. UDP-N-acetyl-alpha-D-glucosamine contacts are provided by tyrosine 365 and asparagine 376. Acetyl-CoA is bound by residues alanine 422 and arginine 439.

It in the N-terminal section; belongs to the N-acetylglucosamine-1-phosphate uridyltransferase family. In the C-terminal section; belongs to the transferase hexapeptide repeat family. As to quaternary structure, homotrimer. Requires Mg(2+) as cofactor.

The protein resides in the cytoplasm. It catalyses the reaction alpha-D-glucosamine 1-phosphate + acetyl-CoA = N-acetyl-alpha-D-glucosamine 1-phosphate + CoA + H(+). The catalysed reaction is N-acetyl-alpha-D-glucosamine 1-phosphate + UTP + H(+) = UDP-N-acetyl-alpha-D-glucosamine + diphosphate. It participates in nucleotide-sugar biosynthesis; UDP-N-acetyl-alpha-D-glucosamine biosynthesis; N-acetyl-alpha-D-glucosamine 1-phosphate from alpha-D-glucosamine 6-phosphate (route II): step 2/2. It functions in the pathway nucleotide-sugar biosynthesis; UDP-N-acetyl-alpha-D-glucosamine biosynthesis; UDP-N-acetyl-alpha-D-glucosamine from N-acetyl-alpha-D-glucosamine 1-phosphate: step 1/1. Its pathway is bacterial outer membrane biogenesis; LPS lipid A biosynthesis. Catalyzes the last two sequential reactions in the de novo biosynthetic pathway for UDP-N-acetylglucosamine (UDP-GlcNAc). The C-terminal domain catalyzes the transfer of acetyl group from acetyl coenzyme A to glucosamine-1-phosphate (GlcN-1-P) to produce N-acetylglucosamine-1-phosphate (GlcNAc-1-P), which is converted into UDP-GlcNAc by the transfer of uridine 5-monophosphate (from uridine 5-triphosphate), a reaction catalyzed by the N-terminal domain. The chain is Bifunctional protein GlmU from Lactobacillus delbrueckii subsp. bulgaricus (strain ATCC BAA-365 / Lb-18).